We begin with the raw amino-acid sequence, 609 residues long: Arginine--tRNA ligase (609 aa).

A 'HIGH' region motif is present at residues 114–124; the sequence is VNPNKELHVGH.

It belongs to the class-I aminoacyl-tRNA synthetase family. As to quaternary structure, monomer.

The protein localises to the cytoplasm. The enzyme catalyses tRNA(Arg) + L-arginine + ATP = L-arginyl-tRNA(Arg) + AMP + diphosphate. The chain is Arginine--tRNA ligase from Deinococcus radiodurans (strain ATCC 13939 / DSM 20539 / JCM 16871 / CCUG 27074 / LMG 4051 / NBRC 15346 / NCIMB 9279 / VKM B-1422 / R1).